The following is a 229-amino-acid chain: Uracil-DNA glycosylase (229 aa).

Residue Asp67 is the Proton acceptor of the active site.

This sequence belongs to the uracil-DNA glycosylase (UDG) superfamily. UNG family.

The protein localises to the cytoplasm. It catalyses the reaction Hydrolyzes single-stranded DNA or mismatched double-stranded DNA and polynucleotides, releasing free uracil.. Excises uracil residues from the DNA which can arise as a result of misincorporation of dUMP residues by DNA polymerase or due to deamination of cytosine. This chain is Uracil-DNA glycosylase, found in Coxiella burnetii (strain CbuG_Q212) (Coxiella burnetii (strain Q212)).